Consider the following 576-residue polypeptide: Protein alan shepard (576 aa).

Pro residues predominate over residues 1–12 (MHPRYSPAPPPQ). Residues 1-66 (MHPRYSPAPP…GSSSSAAAAP (66 aa)) form a disordered region. Tyrosine 5 carries the phosphotyrosine modification. A compositionally biased stretch (low complexity) spans 13–24 (QQQQMGGPPHQQ). Residues 25–35 (QGGGGGGGGNM) show a composition bias toward gly residues. The span at 37–54 (GPSNAQQLPPQIPRSQNY) shows a compositional bias: polar residues. Residues 55 to 66 (SNGSSSSAAAAP) are compositionally biased toward low complexity. Residues tyrosine 125 and tyrosine 142 each carry the phosphotyrosine modification. The interval 164–225 (PATTTYGQRV…TVQNQNQQGG (62 aa)) is disordered. Positions 178 to 225 (SPSNTNSSSSSNTGSQSGTLSTSLSNTTNTNTNMGPNGTVQNQNQQGG) are enriched in low complexity. 2 RRM domains span residues 231-302 (TNLY…MAKQ) and 308-387 (TNLY…FADG). Residues 538–576 (YAPPPTIIPTMPMTDSEQASTAASPDEAYTQYPHQAAPK) form a disordered region.

Its function is as follows. Has a role in the perception of gravity. This Drosophila simulans (Fruit fly) protein is Protein alan shepard.